Reading from the N-terminus, the 621-residue chain is Chaperone protein dnaK (621 aa).

The segment at Val-597–Ala-621 is disordered.

This sequence belongs to the heat shock protein 70 family.

The protein resides in the plastid. The protein localises to the chloroplast. Acts as a chaperone. The sequence is that of Chaperone protein dnaK from Gracilaria tenuistipitata var. liui (Red alga).